The chain runs to 717 residues: Glutamate--cysteine ligase (717 aa).

The interval 484–576 is disordered; sequence SKTTEQRAAK…TDSDHTDTDD (93 aa). Composition is skewed to low complexity over residues 492–518 and 551–567; these read AKAQ…NGNG and GTTN…SNGT.

The protein belongs to the glutamate--cysteine ligase type 3 family.

It catalyses the reaction L-cysteine + L-glutamate + ATP = gamma-L-glutamyl-L-cysteine + ADP + phosphate + H(+). The catalysed reaction is (2S)-2-aminobutanoate + L-glutamate + ATP = gamma-L-glutamyl-(2S)-2-aminobutanoate + ADP + phosphate + H(+). It functions in the pathway sulfur metabolism; glutathione biosynthesis; glutathione from L-cysteine and L-glutamate: step 1/2. In terms of biological role, catalyzes the ATP-dependent ligation of L-glutamate and L-cysteine and participates in the first and rate-limiting step in glutathione biosynthesis. The polypeptide is Glutamate--cysteine ligase (Drosophila melanogaster (Fruit fly)).